The sequence spans 392 residues: tRNA (guanine-N(7)-)-methyltransferase (392 aa).

S-adenosyl-L-methionine-binding residues include Glu123, Glu148, and Asp175. Residues Lys201 and Asp231 each contribute to the substrate site.

This sequence belongs to the class I-like SAM-binding methyltransferase superfamily. TrmB family.

The enzyme catalyses guanosine(46) in tRNA + S-adenosyl-L-methionine = N(7)-methylguanosine(46) in tRNA + S-adenosyl-L-homocysteine. It functions in the pathway tRNA modification; N(7)-methylguanine-tRNA biosynthesis. Functionally, catalyzes the formation of N(7)-methylguanine at position 46 (m7G46) in tRNA. The sequence is that of tRNA (guanine-N(7)-)-methyltransferase from Campylobacter jejuni subsp. jejuni serotype O:6 (strain 81116 / NCTC 11828).